The sequence spans 129 residues: Large ribosomal subunit protein bL12 (129 aa).

The protein belongs to the bacterial ribosomal protein bL12 family. Homodimer. Part of the ribosomal stalk of the 50S ribosomal subunit. Forms a multimeric L10(L12)X complex, where L10 forms an elongated spine to which 2 to 4 L12 dimers bind in a sequential fashion. Binds GTP-bound translation factors.

Functionally, forms part of the ribosomal stalk which helps the ribosome interact with GTP-bound translation factors. Is thus essential for accurate translation. The polypeptide is Large ribosomal subunit protein bL12 (Pseudothermotoga lettingae (strain ATCC BAA-301 / DSM 14385 / NBRC 107922 / TMO) (Thermotoga lettingae)).